The primary structure comprises 494 residues: One cut domain family member 3 (494 aa).

Disordered regions lie at residues 130–162 (AAAV…RLAA), 199–239 (LSPL…GDKL), and 295–319 (AHGP…AAAE). Pro residues-rich tracts occupy residues 148-158 (AAAPPPPPPPQ) and 214-225 (PQPPPPPPPPPL). Positions 297-313 (GPHGGGGGPGGSGGGPS) are enriched in gly residues. The segment at residues 312-398 (PSAGAAAEEI…QRMSALRLAA (87 aa)) is a DNA-binding region (CUT). The homeobox DNA-binding region spans 414 to 473 (PKKQRLVFTDLQRRTLIAIFKENKRPSKEMQVTISQQLGLELNTVSNFFMNARRRCMNRW). The segment at 475 to 494 (EEPSTAPGGPAGATATFSKA) is disordered. Over residues 476–494 (EPSTAPGGPAGATATFSKA) the composition is skewed to low complexity.

The protein belongs to the CUT homeobox family.

It is found in the nucleus. Its function is as follows. Transcriptional activator. Binds the consensus DNA sequence 5'-DHWATTGAYTWWD-3' on a variety of gene promoters such as those of HNF3B and TTR. This is One cut domain family member 3 (ONECUT3) from Homo sapiens (Human).